We begin with the raw amino-acid sequence, 664 residues long: Delta-like protein C (664 aa).

A signal peptide spans 1 to 20 (MARVLLTCFFILISSHLGKS). The Extracellular portion of the chain corresponds to 21 to 511 (SGVFELKVLS…VNSPALPAAL (491 aa)). The region spanning 154–198 (VVCDEFYHGEECSDFCRPRNDTFGHFNCDAAGNRICLPGWKGDYC) is the DSL domain. Cystine bridges form between Cys-156-Cys-165, Cys-169-Cys-181, Cys-189-Cys-198, Cys-203-Cys-214, Cys-207-Cys-220, Cys-222-Cys-231, Cys-234-Cys-245, Cys-240-Cys-251, Cys-253-Cys-262, Cys-269-Cys-281, Cys-275-Cys-291, Cys-293-Cys-302, Cys-309-Cys-320, Cys-314-Cys-329, Cys-331-Cys-340, Cys-347-Cys-358, Cys-352-Cys-368, Cys-370-Cys-379, Cys-386-Cys-397, Cys-391-Cys-406, Cys-408-Cys-417, Cys-424-Cys-435, Cys-429-Cys-444, Cys-446-Cys-455, Cys-462-Cys-473, Cys-467-Cys-482, and Cys-484-Cys-493. Asn-173 carries an N-linked (GlcNAc...) asparagine glycan. EGF-like domains lie at 199 to 232 (TEPI…PLCD), 233 to 263 (ECTR…LFCN), and 265 to 303 (DLNF…KNCE). The EGF-like 4; calcium-binding domain maps to 305 to 341 (ETNECDSNPCKNGGSCNDQENDYTCTCPQGFYGKNCE). 2 consecutive EGF-like domains span residues 343 to 380 (SAMT…SNCE) and 382 to 418 (KIDR…SRCE). Positions 420–456 (NIDDCSSNPCQNAGTCVDGINGYTCTCTLGFSGKDCR) constitute an EGF-like 7; calcium-binding domain. An EGF-like 8 domain is found at 458-494 (RSDACSFMPCQNGGTCYTHFSGPVCQCPAGFMGTQCE). A helical transmembrane segment spans residues 512–532 (IVSFTLGLITLTLVICAAIVV). Topologically, residues 533-664 (LRQMRQNHKA…IEQRVFATEV (132 aa)) are cytoplasmic.

In terms of processing, ubiquitinated by mib, leading to its endocytosis and subsequent degradation. As to expression, strongly expressed in the early retina, where it precedes other delta proteins. Also expressed in cranial ganglia, in sensory epithelia including ear and lateral line and in scattered epidermal cells. In the mesoderm, expression is visible by 50% epiboly; it is expressed subsequently in the tail bud, in stripes in the presomitic mesoderm and in the posterior half of each somite. Also expressed in notochord, blood vessels and pronephros. In contrast to other delta proteins, it is not expressed in the majority of nascent primary neurons. In somites, it marks the posterior part of each formed somite, while deltaD (dld) marks the anterior part.

Its subcellular location is the membrane. Functionally, acts as a ligand for Notch receptors and is involved in somitogenesis. Can activate Notch receptors. Required in somite segmentation to keep the oscillations of neighboring presomitic mesoderm cells synchronized. The sequence is that of Delta-like protein C (dlc) from Danio rerio (Zebrafish).